An 85-amino-acid polypeptide reads, in one-letter code: Large ribosomal subunit protein bL27 (85 aa).

Positions 1 to 21 are disordered; sequence MAHKKAGGSTRNGRDSEGKRL.

The protein belongs to the bacterial ribosomal protein bL27 family.

This is Large ribosomal subunit protein bL27 from Hamiltonella defensa subsp. Acyrthosiphon pisum (strain 5AT).